Here is a 247-residue protein sequence, read N- to C-terminus: ATP synthase subunit a, chloroplastic (247 aa).

A run of 5 helical transmembrane segments spans residues 38–58, 95–115, 134–154, 199–219, and 220–240; these read QVLITSWVVIAILLGSVTIAV, VPFIGTMFLFIFVSNWSGALF, INTTVALALPTSVAYFYAGLT, LVVVVLVSLVPSVVPIPVMFL, and GLFTSGIQALIFATLAAAYIG.

This sequence belongs to the ATPase A chain family. As to quaternary structure, F-type ATPases have 2 components, CF(1) - the catalytic core - and CF(0) - the membrane proton channel. CF(1) has five subunits: alpha(3), beta(3), gamma(1), delta(1), epsilon(1). CF(0) has four main subunits: a, b, b' and c.

Its subcellular location is the plastid. The protein localises to the chloroplast thylakoid membrane. In terms of biological role, key component of the proton channel; it plays a direct role in the translocation of protons across the membrane. The sequence is that of ATP synthase subunit a, chloroplastic from Piper cenocladum (Ant piper).